The primary structure comprises 27 residues: EVHNFACLGKPDPGGCAHYIYRRYYYV.

A BPTI/Kunitz inhibitor domain is found at 1–27 (EVHNFACLGKPDPGGCAHYIYRRYYYV).

The protein resides in the secreted. Inhibits bovine trypsin and human neutrophil elastase. In Rhipicephalus microplus (Cattle tick), this protein is Kunitz-type serine protease inhibitor 3.